A 31-amino-acid chain; its full sequence is Antifungal protein 1 (31 aa).

Composition is skewed to basic and acidic residues over residues 1–10 and 18–31; these read PGAGSQEERM and DFSH…MVRE. Positions 1–31 are disordered; it reads PGAGSQEERMQGQMEGQDFSHEERFLSMVRE.

Heterodimer; disulfide-linked. Disulfide bonds.

Its function is as follows. Has antifungal activity against C.gloeosporioides but not against B.cinerea and Fusarium sp. or against various yeasts. Has no antibacterial activity. The sequence is that of Antifungal protein 1 from Passiflora alata (Winged-stem passion flower).